The primary structure comprises 250 residues: ATP synthase subunit a (250 aa).

A run of 5 helical transmembrane segments spans residues threonine 27 to leucine 47, phenylalanine 86 to valine 106, isoleucine 129 to tryptophan 149, isoleucine 191 to alanine 211, and phenylalanine 219 to phenylalanine 239.

This sequence belongs to the ATPase A chain family. F-type ATPases have 2 components, CF(1) - the catalytic core - and CF(0) - the membrane proton channel. CF(1) has five subunits: alpha(3), beta(3), gamma(1), delta(1), epsilon(1). CF(0) has three main subunits: a(1), b(2) and c(9-12). The alpha and beta chains form an alternating ring which encloses part of the gamma chain. CF(1) is attached to CF(0) by a central stalk formed by the gamma and epsilon chains, while a peripheral stalk is formed by the delta and b chains.

It localises to the cell membrane. Its function is as follows. Key component of the proton channel; it plays a direct role in the translocation of protons across the membrane. In Mycobacterium bovis (strain ATCC BAA-935 / AF2122/97), this protein is ATP synthase subunit a.